Here is a 389-residue protein sequence, read N- to C-terminus: Lipid-A-disaccharide synthase (389 aa).

Belongs to the LpxB family.

The enzyme catalyses a lipid X + a UDP-2-N,3-O-bis[(3R)-3-hydroxyacyl]-alpha-D-glucosamine = a lipid A disaccharide + UDP + H(+). It functions in the pathway bacterial outer membrane biogenesis; LPS lipid A biosynthesis. Condensation of UDP-2,3-diacylglucosamine and 2,3-diacylglucosamine-1-phosphate to form lipid A disaccharide, a precursor of lipid A, a phosphorylated glycolipid that anchors the lipopolysaccharide to the outer membrane of the cell. The sequence is that of Lipid-A-disaccharide synthase from Paraburkholderia phymatum (strain DSM 17167 / CIP 108236 / LMG 21445 / STM815) (Burkholderia phymatum).